The primary structure comprises 144 residues: Small ribosomal subunit protein bS6 (144 aa).

Residues Pro95–Ser144 are disordered. A compositionally biased stretch (basic and acidic residues) spans Gln104–Ser114.

Belongs to the bacterial ribosomal protein bS6 family.

In terms of biological role, binds together with bS18 to 16S ribosomal RNA. This chain is Small ribosomal subunit protein bS6, found in Nitrosomonas eutropha (strain DSM 101675 / C91 / Nm57).